The sequence spans 231 residues: Demethylmenaquinone methyltransferase (231 aa).

S-adenosyl-L-methionine is bound by residues T62, D80, 100-101 (DA), and S117.

The protein belongs to the class I-like SAM-binding methyltransferase superfamily. MenG/UbiE family.

The catalysed reaction is a 2-demethylmenaquinol + S-adenosyl-L-methionine = a menaquinol + S-adenosyl-L-homocysteine + H(+). It functions in the pathway quinol/quinone metabolism; menaquinone biosynthesis; menaquinol from 1,4-dihydroxy-2-naphthoate: step 2/2. Methyltransferase required for the conversion of demethylmenaquinol (DMKH2) to menaquinol (MKH2). In Mycobacterium marinum (strain ATCC BAA-535 / M), this protein is Demethylmenaquinone methyltransferase.